Reading from the N-terminus, the 284-residue chain is Bifunctional protein FolD (284 aa).

Residues 166-168 (GRS) and Ser-191 each bind NADP(+).

It belongs to the tetrahydrofolate dehydrogenase/cyclohydrolase family. As to quaternary structure, homodimer.

The enzyme catalyses (6R)-5,10-methylene-5,6,7,8-tetrahydrofolate + NADP(+) = (6R)-5,10-methenyltetrahydrofolate + NADPH. It catalyses the reaction (6R)-5,10-methenyltetrahydrofolate + H2O = (6R)-10-formyltetrahydrofolate + H(+). It participates in one-carbon metabolism; tetrahydrofolate interconversion. In terms of biological role, catalyzes the oxidation of 5,10-methylenetetrahydrofolate to 5,10-methenyltetrahydrofolate and then the hydrolysis of 5,10-methenyltetrahydrofolate to 10-formyltetrahydrofolate. The polypeptide is Bifunctional protein FolD (Leptospira borgpetersenii serovar Hardjo-bovis (strain JB197)).